Reading from the N-terminus, the 389-residue chain is Protein MEI2-like 7 (389 aa).

The span at 170 to 184 shows a compositional bias: basic residues; that stretch reads RRGMSKVYKPRKPQR. Residues 170-211 are disordered; it reads RRGMSKVYKPRKPQRAGRERSPSPSPVFTTRPMSPTPPMQKL. Residues 216-320 form the RRM domain; that stretch reads TTVMVRNIPN…KIIDIRAARI (105 aa). A disordered region spans residues 351 to 370; it reads PRDGSTAGAGAPSPPAVKTV.

In terms of biological role, probable RNA-binding protein that may play a role in growth regulation. The polypeptide is Protein MEI2-like 7 (OML7) (Oryza sativa subsp. japonica (Rice)).